The primary structure comprises 347 residues: Phosphoribosylformylglycinamidine cyclo-ligase (347 aa).

The protein belongs to the AIR synthase family.

Its subcellular location is the cytoplasm. It catalyses the reaction 2-formamido-N(1)-(5-O-phospho-beta-D-ribosyl)acetamidine + ATP = 5-amino-1-(5-phospho-beta-D-ribosyl)imidazole + ADP + phosphate + H(+). It participates in purine metabolism; IMP biosynthesis via de novo pathway; 5-amino-1-(5-phospho-D-ribosyl)imidazole from N(2)-formyl-N(1)-(5-phospho-D-ribosyl)glycinamide: step 2/2. This is Phosphoribosylformylglycinamidine cyclo-ligase from Bacillus cytotoxicus (strain DSM 22905 / CIP 110041 / 391-98 / NVH 391-98).